The primary structure comprises 93 residues: MKTLILLSALVLLAFQVQADPIQNTDEETKTEEQPGEEDQAVSVSFGDPEGTSLQEESLRDLVCYCRSRGCKGRERMNGTCRKGHLMYTLCCR.

Residues 1–19 (MKTLILLSALVLLAFQVQA) form the signal peptide. The propeptide occupies 20–58 (DPIQNTDEETKTEEQPGEEDQAVSVSFGDPEGTSLQEES). The segment at 22 to 54 (IQNTDEETKTEEQPGEEDQAVSVSFGDPEGTSL) is disordered. Disulfide bonds link cysteine 64/cysteine 92, cysteine 66/cysteine 81, and cysteine 71/cysteine 91.

It belongs to the alpha-defensin family. As to expression, paneth cells of the small bowel.

It is found in the secreted. Probably contributes to the antimicrobial barrier function of the small bowel mucosa. In Mus musculus (Mouse), this protein is Alpha-defensin 16 (Defa16).